The primary structure comprises 87 residues: Small ribosomal subunit protein uS17 (87 aa).

This sequence belongs to the universal ribosomal protein uS17 family. Part of the 30S ribosomal subunit.

One of the primary rRNA binding proteins, it binds specifically to the 5'-end of 16S ribosomal RNA. The protein is Small ribosomal subunit protein uS17 of Bacillus thuringiensis (strain Al Hakam).